The chain runs to 542 residues: Probable folate-biopterin transporter 8, chloroplastic (542 aa).

The transit peptide at 1 to 78 directs the protein to the chloroplast; the sequence is MERIMINPLL…GVSEFEETAR (78 aa). The interval 24-45 is disordered; sequence LSSIHRQQQQQERQSNNNTLFM. The next 12 membrane-spanning stretches (helical) occupy residues 103–123, 132–152, 155–175, 181–201, 223–243, 246–266, 308–328, 338–358, 369–389, 404–424, 446–466, and 477–497; these read FPWL…PSTL, LPMV…IGSG, VPYI…MGIF, VLPS…ITEV, ALMA…YLLL, PPKI…VVSL, LIWA…VFCY, SVIG…TVVY, PLIH…YILV, VLCF…PFAV, LCLS…LIGI, and GILI…LVPM. The interval 506 to 542 is disordered; that stretch reads GKRGISKRSRRNRRVGRVVDKESVTYRRERESEEAQR. Residues 509 to 521 are compositionally biased toward basic residues; that stretch reads GISKRSRRNRRVG. Positions 522 to 542 are enriched in basic and acidic residues; the sequence is RVVDKESVTYRRERESEEAQR.

This sequence belongs to the major facilitator superfamily. Folate-biopterin transporter (TC 2.A.71) family.

It localises to the plastid. The protein resides in the chloroplast membrane. Its function is as follows. Could mediate folate transport. In Arabidopsis thaliana (Mouse-ear cress), this protein is Probable folate-biopterin transporter 8, chloroplastic.